Here is a 358-residue protein sequence, read N- to C-terminus: 2-oxoisovalerate dehydrogenase subunit beta 2, mitochondrial (358 aa).

The N-terminal 16 residues, 1–16 (MAAALVRRFCRGSSFP), are a transit peptide targeting the mitochondrion. Thiamine diphosphate is bound at residue Y119. K(+) contacts are provided by G145, L147, T148, D198, and N200.

Heterotetramer of alpha and beta chains. It depends on thiamine diphosphate as a cofactor. Expressed in the non-photosynthetic organs such as siliques, flowers and roots.

The protein localises to the mitochondrion matrix. The enzyme catalyses N(6)-[(R)-lipoyl]-L-lysyl-[protein] + 3-methyl-2-oxobutanoate + H(+) = N(6)-[(R)-S(8)-2-methylpropanoyldihydrolipoyl]-L-lysyl-[protein] + CO2. Functionally, the branched-chain alpha-keto dehydrogenase complex catalyzes the overall conversion of alpha-keto acids to acyl-CoA and CO(2). It contains multiple copies of three enzymatic components: branched-chain alpha-keto acid decarboxylase (E1), lipoamide acyltransferase (E2) and lipoamide dehydrogenase (E3). Required during sugar starvation and acts under the control of a sugar-sensing mechanism involving Ser/Thr kinases and phosphatases. This chain is 2-oxoisovalerate dehydrogenase subunit beta 2, mitochondrial (DIN4), found in Arabidopsis thaliana (Mouse-ear cress).